A 2360-amino-acid chain; its full sequence is Nucleoprotein TPR (2360 aa).

Ala2 carries the N-acetylalanine modification. The segment at 3–13 (AVLQQVLERPE) is sufficient for interaction with TPR. The interval 14–117 (LNKLPKSTQN…GIQSQFTRAK (104 aa)) is necessary for interaction with HSF1. Positions 24 to 370 (KLEKFLAEQQ…SATKRKGAIL (347 aa)) form a coiled coil. Lys252, Lys312, and Lys345 each carry N6-acetyllysine. Residue Ser379 is modified to Phosphoserine. Residues 423–603 (LDEIVKEVEA…RESRQHQMQL (181 aa)) adopt a coiled-coil conformation. Residues Lys428, Lys457, and Lys477 each carry the N6-acetyllysine modification. The necessary for association to the NPC stretch occupies residues 437–513 (LKRQREEYER…LMELEEARGN (77 aa)). Phosphoserine is present on residues Ser522, Ser523, and Ser632. Positions 664–1172 (ETIEAKAALK…IEKLSDKVVT (509 aa)) form a coiled coil. 4 positions are modified to N6-acetyllysine: Lys713, Lys723, Lys748, and Lys755. The segment covering 915 to 924 (LASQSTQRTG) has biased composition (polar residues). The tract at residues 915 to 939 (LASQSTQRTGKGQPGDRDDVDDLKS) is disordered. Residues 928 to 939 (PGDRDDVDDLKS) show a composition bias toward basic and acidic residues. 2 positions are modified to phosphoserine: Ser1180 and Ser1185. Coiled-coil stretches lie at residues 1215–1420 (EVAQ…LDAK) and 1472–1629 (VQEM…QRDE). Residues 1218–1320 (QVESLRYRQR…NAELSEKSGM (103 aa)) are necessary for interaction with HSF1. Disordered stretches follow at residues 1479-1520 (KDNL…TAQL) and 1618-1673 (EHQE…PTPV). Composition is skewed to basic and acidic residues over residues 1503-1512 (LSEKETEARS) and 1618-1630 (EHQE…RDEP). Positions 1632–1651 (EPTNKAPEQQRQITLKTTPA) are enriched in polar residues. An N6-acetyllysine modification is found at Lys1689. Thr1691 carries the post-translational modification Phosphothreonine. A compositionally biased stretch (polar residues) spans 1801–1826 (QSSPVERPSTSTAVFGTVSATPSSSL). Positions 1801–2122 (QSSPVERPST…TPGIGGMQQH (322 aa)) are disordered. The interval 1811–1866 (STAVFGTVSATPSSSLPKRAREEEEDSTIEAGDQVSDDTVEMPLPKKLKTVTPVGT) is sufficient and essential for mediating its nuclear import. Residues 1866 to 1880 (TEEEVMAEESTDGEA) show a composition bias toward acidic residues. Residues 1881–1892 (ETQTYNQDSQDS) show a composition bias toward polar residues. The residue at position 1892 (Ser1892) is a Phosphoserine. The span at 1923–1934 (QSDQQTTSSQDG) shows a compositional bias: low complexity. Acidic residues-rich tracts occupy residues 1945-1986 (DSDD…EDSN) and 1996-2017 (DGYE…ETEE). Over residues 2023 to 2061 (ESNQRAADSQNSGEGNTSAAESSFSQEVAREQQPTSASE) the composition is skewed to polar residues. 5 positions are modified to phosphoserine: Ser2031, Ser2034, Ser2045, Ser2047, and Ser2070. Omega-N-methylarginine occurs at positions 2103 and 2108. A phosphothreonine mark is found at Thr2113 and Thr2134. Ser2152 is subject to Phosphoserine. The residue at position 2160 (Arg2160) is an Omega-N-methylarginine. The segment covering 2224-2241 (ESTTSDASEHASQSVPMV) has biased composition (polar residues). The disordered stretch occupies residues 2224-2360 (ESTTSDASEH…RGGINRGNIN (137 aa)). Residues 2242-2254 (TTSTGTLSTTNET) are compositionally biased toward low complexity. Acidic residues-rich tracts occupy residues 2256-2269 (AGDD…ETES) and 2282-2296 (SQQE…DESD). Residues 2297-2317 (LPSTSQDPPSSSSVDTSSSQP) show a composition bias toward low complexity. 3 positions are modified to asymmetric dimethylarginine: Arg2340, Arg2342, and Arg2351. Gly residues predominate over residues 2349 to 2360 (GGRGGINRGNIN).

The protein belongs to the TPR family. Homodimer. Part of the nuclear pore complex (NPC). Associates with the XPO1/CRM1-mediated nuclear export complex, the Importin alpha/Importin beta receptor and the dynein 1 complex. Interacts (via C-terminal domain) with the KPNB1; the interaction occurs in a RanGTP-dependent manner. Interacts (via C-terminal region and phosphorylated form) with MAPK1/ERK2 (via phosphorylated form); the interaction requires dimerization of MAPK1/ERK2 and increases following EGF stimulation. Interacts with MAPK3/ERK1; the interaction increases following EGF stimulation. Interacts (via coiled coil region) with NUP153; the interaction is direct. Interacts with HSF1; the interaction increases in a stress-responsive manner and stimulates export of stress-induced HSP70 mRNA. Interacts with huntingtin/HTT; the interaction is inhibited by aggregated huntingtin/HTT forms with expanded polyglutamine stretch. Interacts with MAD1L1 (via N-terminal region), MAD2L1, and TTK; the interactions occurs in a microtubule-independent manner. Interacts (via middle region) with DYNLL1. Interacts with DCTN1, dynein, NUP153 and tubulin. Interacts with IFI204 (via C-terminal region). Interacts with IFI203. Interacts with MTA1. Interacts with ZC3HC1; this interaction mediates ZC3HC1 nuclear envelopes (NE)-association but also required for proper positioning of a substantial amount of TPR at the nuclear basket (NB). In terms of processing, phosphorylated. Phosphorylation occurs on serine and threonine residues (comprised in the C-terminal region) by MAPK1/ERK2 and stabilizes the interaction between these two proteins.

The protein resides in the nucleus. It is found in the nucleus membrane. Its subcellular location is the nucleus envelope. It localises to the nuclear pore complex. The protein localises to the cytoplasm. The protein resides in the cytoskeleton. It is found in the spindle. Its subcellular location is the chromosome. It localises to the centromere. The protein localises to the kinetochore. In terms of biological role, component of the nuclear pore complex (NPC), a complex required for the trafficking across the nuclear envelope. Functions as a scaffolding element in the nuclear phase of the NPC essential for normal nucleocytoplasmic transport of proteins and mRNAs, plays a role in the establishment of nuclear-peripheral chromatin compartmentalization in interphase, and in the mitotic spindle checkpoint signaling during mitosis. Involved in the quality control and retention of unspliced mRNAs in the nucleus; in association with NUP153, regulates the nuclear export of unspliced mRNA species bearing constitutive transport element (CTE) in a NXF1- and KHDRBS1-independent manner. Negatively regulates both the association of CTE-containing mRNA with large polyribosomes and translation initiation. Does not play any role in Rev response element (RRE)-mediated export of unspliced mRNAs. Implicated in nuclear export of mRNAs transcribed from heat shock gene promoters; associates both with chromatin in the HSP70 promoter and with mRNAs transcribed from this promoter under stress-induced conditions. Modulates the nucleocytoplasmic transport of activated MAPK1/ERK2 and huntingtin/HTT and may serve as a docking site for the XPO1/CRM1-mediated nuclear export complex. Also plays a role as a structural and functional element of the perinuclear chromatin distribution; involved in the formation and/or maintenance of NPC-associated perinuclear heterochromatin exclusion zones (HEZs). Finally, acts as a spatial regulator of the spindle-assembly checkpoint (SAC) response ensuring a timely and effective recruitment of spindle checkpoint proteins like MAD1L1 and MAD2L1 to unattached kinetochore during the metaphase-anaphase transition before chromosome congression. Its N-terminus is involved in activation of oncogenic kinases. Plays a role in the regulation of nuclear protein export. The chain is Nucleoprotein TPR from Rattus norvegicus (Rat).